Reading from the N-terminus, the 133-residue chain is Ribonuclease P protein component (133 aa).

The protein belongs to the RnpA family. As to quaternary structure, consists of a catalytic RNA component (M1 or rnpB) and a protein subunit.

It carries out the reaction Endonucleolytic cleavage of RNA, removing 5'-extranucleotides from tRNA precursor.. Its function is as follows. RNaseP catalyzes the removal of the 5'-leader sequence from pre-tRNA to produce the mature 5'-terminus. It can also cleave other RNA substrates such as 4.5S RNA. The protein component plays an auxiliary but essential role in vivo by binding to the 5'-leader sequence and broadening the substrate specificity of the ribozyme. This Pseudomonas fluorescens (strain Pf0-1) protein is Ribonuclease P protein component.